Reading from the N-terminus, the 126-residue chain is Fluoride-specific ion channel FluC (126 aa).

Helical transmembrane passes span 1–21 (MIVI…FGLD), 40–60 (LATL…GGFA), 72–92 (AISI…VATV), and 104–124 (MVNI…GLSL). 2 residues coordinate Na(+): Gly79 and Thr82.

Belongs to the fluoride channel Fluc/FEX (TC 1.A.43) family.

Its subcellular location is the cell membrane. It catalyses the reaction fluoride(in) = fluoride(out). Na(+) is not transported, but it plays an essential structural role and its presence is essential for fluoride channel function. Its function is as follows. Fluoride-specific ion channel. Important for reducing fluoride concentration in the cell, thus reducing its toxicity. The chain is Fluoride-specific ion channel FluC from Renibacterium salmoninarum (strain ATCC 33209 / DSM 20767 / JCM 11484 / NBRC 15589 / NCIMB 2235).